Reading from the N-terminus, the 1099-residue chain is Sodium/potassium/calcium exchanger 1 (1099 aa).

Residues Met1–Gln452 lie on the Extracellular side of the membrane. Polar residues predominate over residues Pro123–Ala134. 3 disordered regions span residues Pro123 to Thr150, Thr169 to Thr199, and Pro284 to Pro304. Asn290 carries N-linked (GlcNAc...) asparagine glycosylation. A helical membrane pass occupies residues Gly453–Cys473. Over Asp474–Ala497 the chain is Cytoplasmic. An Alpha-1 repeat occupies Val494–Phe534. A helical transmembrane segment spans residues Thr498–Ile518. Topologically, residues Ser519 to Asn522 are extracellular. The helical transmembrane segment at Val523 to Cys543 threads the bilayer. Residues Ser544–Ser563 lie on the Cytoplasmic side of the membrane. The chain crosses the membrane as a helical span at residues Phe564–Trp584. Position 585 (Glu585) is a topological domain, extracellular. A helical membrane pass occupies residues Ser586–Ile606. Residues Glu607 to Lys907 are Cytoplasmic-facing. A Phosphoserine modification is found at Ser658. Positions Glu690–Trp901 are disordered. Thr724 carries the phosphothreonine modification. A compositionally biased stretch (acidic residues) spans Pro757 to Thr769. 2 stretches are compositionally biased toward basic and acidic residues: residues Glu813–Glu825 and Ala835–Glu849. The segment covering Gly857 to Gly892 has biased composition (acidic residues). A helical membrane pass occupies residues Gln908 to Val928. Residues Arg929–Lys935 are Extracellular-facing. The helical transmembrane segment at Phe936–Val956 threads the bilayer. Over Trp957–Glu971 the chain is Cytoplasmic. Residues Ile972–Ile992 form a helical membrane-spanning segment. An Alpha-2 repeat occupies Ala979–Asn1010. The Extracellular portion of the chain corresponds to Val993–Asn1010. A helical membrane pass occupies residues Ile1011–Leu1031. Residues Gln1032 to Asn1039 lie on the Cytoplasmic side of the membrane. A helical membrane pass occupies residues Gly1040–Ala1060. Over Ser1061 to Lys1068 the chain is Extracellular. A helical membrane pass occupies residues Ile1069–Glu1089. Topologically, residues Asp1090–Val1099 are cytoplasmic.

Belongs to the Ca(2+):cation antiporter (CaCA) (TC 2.A.19) family. SLC24A subfamily. The uncleaved signal sequence is required for efficient membrane targeting and proper membrane integration. Expressed in the retina, particularly in the inner segment, outer and inner nuclear layers, and ganglion cell layer.

The protein localises to the cell membrane. It carries out the reaction Ca(2+)(out) + K(+)(out) + 4 Na(+)(in) = Ca(2+)(in) + K(+)(in) + 4 Na(+)(out). Calcium, potassium:sodium antiporter that transports 1 Ca(2+) and 1 K(+) in exchange for 4 Na(+). Critical component of the visual transduction cascade, controlling the calcium concentration of outer segments during light and darkness. Light causes a rapid lowering of cytosolic free calcium in the outer segment of both retinal rod and cone photoreceptors and the light-induced lowering of calcium is caused by extrusion via this protein which plays a key role in the process of light adaptation. This chain is Sodium/potassium/calcium exchanger 1, found in Homo sapiens (Human).